Reading from the N-terminus, the 126-residue chain is MSFAILGFIALGGAVGACARFLVSEICVTLFGRGFPIGTLTVNVVGSFIMGVLIACVENEWLSPYPWKQVIGLGFLGALTTFSTFSMDNVLLMQQGAFFKMGANVLLNVILSISAAWIGFHWLMKS.

4 helical membrane passes run 3 to 23 (FAIL…RFLV), 37 to 57 (IGTL…IACV), 70 to 90 (VIGL…MDNV), and 104 to 124 (NVLL…HWLM). Glycine 77 and threonine 80 together coordinate Na(+).

This sequence belongs to the fluoride channel Fluc/FEX (TC 1.A.43) family.

It is found in the cell inner membrane. It carries out the reaction fluoride(in) = fluoride(out). With respect to regulation, na(+) is not transported, but it plays an essential structural role and its presence is essential for fluoride channel function. Fluoride-specific ion channel. Important for reducing fluoride concentration in the cell, thus reducing its toxicity. This is Fluoride-specific ion channel FluC from Vibrio cholerae serotype O1 (strain ATCC 39541 / Classical Ogawa 395 / O395).